Reading from the N-terminus, the 116-residue chain is UPF0102 protein ELI_05985 (116 aa).

This sequence belongs to the UPF0102 family.

The chain is UPF0102 protein ELI_05985 from Erythrobacter litoralis (strain HTCC2594).